The sequence spans 449 residues: Glucose-6-phosphate isomerase (449 aa).

Glu291 serves as the catalytic Proton donor. Catalysis depends on residues His312 and Lys426.

The protein belongs to the GPI family.

It localises to the cytoplasm. It catalyses the reaction alpha-D-glucose 6-phosphate = beta-D-fructose 6-phosphate. Its pathway is carbohydrate biosynthesis; gluconeogenesis. The protein operates within carbohydrate degradation; glycolysis; D-glyceraldehyde 3-phosphate and glycerone phosphate from D-glucose: step 2/4. Catalyzes the reversible isomerization of glucose-6-phosphate to fructose-6-phosphate. The sequence is that of Glucose-6-phosphate isomerase from Clostridium botulinum (strain Eklund 17B / Type B).